The chain runs to 434 residues: Methylenetetrahydrofolate--tRNA-(uracil-5-)-methyltransferase TrmFO (434 aa).

Residue 10–15 participates in FAD binding; sequence GAGLAG.

The protein belongs to the MnmG family. TrmFO subfamily. The cofactor is FAD.

The protein localises to the cytoplasm. It carries out the reaction uridine(54) in tRNA + (6R)-5,10-methylene-5,6,7,8-tetrahydrofolate + NADH + H(+) = 5-methyluridine(54) in tRNA + (6S)-5,6,7,8-tetrahydrofolate + NAD(+). The enzyme catalyses uridine(54) in tRNA + (6R)-5,10-methylene-5,6,7,8-tetrahydrofolate + NADPH + H(+) = 5-methyluridine(54) in tRNA + (6S)-5,6,7,8-tetrahydrofolate + NADP(+). Catalyzes the folate-dependent formation of 5-methyl-uridine at position 54 (M-5-U54) in all tRNAs. This chain is Methylenetetrahydrofolate--tRNA-(uracil-5-)-methyltransferase TrmFO, found in Bacillus cytotoxicus (strain DSM 22905 / CIP 110041 / 391-98 / NVH 391-98).